A 91-amino-acid chain; its full sequence is MRNYELTTITRVSSREVAKSEIQETLKKHSVSVTAEEDWGQRKLWHPIKHEEQGIFHHYKCSADPNAIEKVEKEFLINQNILRSMVVRLHG.

It belongs to the bacterial ribosomal protein bS6 family.

Its function is as follows. Binds together with bS18 to 16S ribosomal RNA. The chain is Small ribosomal subunit protein bS6 from Leptospira interrogans serogroup Icterohaemorrhagiae serovar copenhageni (strain Fiocruz L1-130).